The primary structure comprises 398 residues: Putative glutamate--cysteine ligase 2 (398 aa).

It belongs to the glutamate--cysteine ligase type 2 family. YbdK subfamily.

The catalysed reaction is L-cysteine + L-glutamate + ATP = gamma-L-glutamyl-L-cysteine + ADP + phosphate + H(+). Functionally, ATP-dependent carboxylate-amine ligase which exhibits weak glutamate--cysteine ligase activity. The protein is Putative glutamate--cysteine ligase 2 of Micrococcus luteus (strain ATCC 4698 / DSM 20030 / JCM 1464 / CCM 169 / CCUG 5858 / IAM 1056 / NBRC 3333 / NCIMB 9278 / NCTC 2665 / VKM Ac-2230) (Micrococcus lysodeikticus).